Consider the following 280-residue polypeptide: Retinoschisin (280 aa).

An N-terminal signal peptide occupies residues 1-23 (MHLPREAFLLALAGAFIFPSSQQ). One can recognise an F5/8 type C domain in the interval 119 to 275 (CPYHRPLGFE…IALRLELLLC (157 aa)). Cystine bridges form between cysteine 119–cysteine 275 and cysteine 166–cysteine 198.

Homooctamer of 4 homodimers; disulfide-linked. The homooctamer has a flat, cogwheel structure with a diameter of about 14 nm. Two stacked octamers can assemble to form a hexadecamer.

The protein localises to the secreted. It is found in the cell membrane. Its function is as follows. Binds negatively charged membrane lipids, such as phosphatidylserine and phosphoinositides. May play a role in cell-cell adhesion processes in the retina, via homomeric interaction between octamers present on the surface of two neighboring cells. Required for normal structure and function of the retina. The protein is Retinoschisin (xlrs1) of Takifugu rubripes (Japanese pufferfish).